A 266-amino-acid polypeptide reads, in one-letter code: MPKGKKAKGKKVAPAPAVVKKQEAKKVVNPLFEKRPKNFGIGQDIQPKRDLTRFVKWPRYIRLQRQRAILYKRLKVPPAINQFTQALDRQTATQLLKLAHKYRPETKQEKKQRLLARAEKKAAGKGDVPTKRPPVLRAGVNTVTTLVENKKAQLVVIAHDVDPIELVVFLPALCRKMGVPYCIIKGKARLGRLVHRKTCTTVAFTQVNSEDKGALAKLVEAIRTNYNDRYDEIRRHWGGNVLGPKSVARIAKLEKAKAKELATKLG.

Residues Lys11, Lys20, and Lys21 each participate in a glycyl lysine isopeptide (Lys-Gly) (interchain with G-Cter in SUMO2) cross-link. At Lys34 the chain carries N6-acetyllysine. Lys48 is covalently cross-linked (Glycyl lysine isopeptide (Lys-Gly) (interchain with G-Cter in SUMO2)). Lys97 carries the post-translational modification N6-acetyllysine; alternate. Lys97 participates in a covalent cross-link: Glycyl lysine isopeptide (Lys-Gly) (interchain with G-Cter in SUMO2); alternate. Lys125 participates in a covalent cross-link: Glycyl lysine isopeptide (Lys-Gly) (interchain with G-Cter in SUMO2). An N6-acetyllysine modification is found at Lys217. A Glycyl lysine isopeptide (Lys-Gly) (interchain with G-Cter in SUMO2) cross-link involves residue Lys245.

It belongs to the eukaryotic ribosomal protein eL8 family. As to quaternary structure, component of the large ribosomal subunit. Interacts with CRY1. Interacts with DICER1, AGO2, TARBP2, MOV10 and EIF6; they form a large RNA-induced silencing complex (RISC).

It is found in the cytoplasm. Functionally, component of the large ribosomal subunit. The ribosome is a large ribonucleoprotein complex responsible for the synthesis of proteins in the cell. The polypeptide is Large ribosomal subunit protein eL8 (Rpl7a) (Rattus norvegicus (Rat)).